Consider the following 205-residue polypeptide: Guanylate kinase (205 aa).

The Guanylate kinase-like domain maps to 3 to 181 (GSLYIISAPS…ALSELHSIFL (179 aa)). 10-17 (APSGAGKT) provides a ligand contact to ATP.

It belongs to the guanylate kinase family.

The protein localises to the cytoplasm. The enzyme catalyses GMP + ATP = GDP + ADP. Functionally, essential for recycling GMP and indirectly, cGMP. The protein is Guanylate kinase of Hydrogenovibrio crunogenus (strain DSM 25203 / XCL-2) (Thiomicrospira crunogena).